Consider the following 547-residue polypeptide: CDK5RAP1-like protein (547 aa).

Residues 79–194 enclose the MTTase N-terminal domain; sequence RTVCYVTYGC…LPRLVAVAAG (116 aa). Residues cysteine 88, cysteine 124, cysteine 157, cysteine 232, cysteine 236, and cysteine 239 each coordinate [4Fe-4S] cluster. The region spanning 218-475 is the Radical SAM core domain; sequence DSASKTAFIS…TTVFREEALK (258 aa). One can recognise a TRAM domain in the interval 478–543; the sequence is QALIGSEQTV…SQTLKAQLIG (66 aa).

It belongs to the methylthiotransferase family. MiaB subfamily. The cofactor is [4Fe-4S] cluster.

In terms of biological role, potential regulator of CDK5 activity. The polypeptide is CDK5RAP1-like protein (Caenorhabditis elegans).